Here is a 68-residue protein sequence, read N- to C-terminus: Large ribosomal subunit protein uL30 (68 aa).

It belongs to the universal ribosomal protein uL30 family. As to quaternary structure, part of the 50S ribosomal subunit.

The sequence is that of Large ribosomal subunit protein uL30 from Kocuria rhizophila (strain ATCC 9341 / DSM 348 / NBRC 103217 / DC2201).